A 139-amino-acid polypeptide reads, in one-letter code: MGLCLAKRNHDADDDEPHIELAGGNVHLITTKERWDQKLSEASRDGKIVLANFSARWCGPCKQIAPYYIELSENYPSLMFLVIDVDELSDFSASWEIKATPTFFFLRDGQQVDKLVGANKPELHKKITAILDSLPPSDK.

The Thioredoxin domain maps to 20 to 132; sequence ELAGGNVHLI…LHKKITAILD (113 aa). Catalysis depends on nucleophile residues Cys-58 and Cys-61. Cys-58 and Cys-61 are oxidised to a cystine.

The protein resides in the cytoplasm. Its function is as follows. Participates in various redox reactions through the reversible oxidation of the active center dithiol to a disulfide. The H form is known to activate a number of cytosolic enzymes. This chain is Thioredoxin H-type, found in Populus jackii (Balm of Gilead).